A 394-amino-acid chain; its full sequence is RNA binding protein fox-1 homolog 2 (394 aa).

Disordered regions lie at residues 1–70 (MGRL…DYAG) and 83–135 (TQAH…HVSN). Composition is skewed to polar residues over residues 24–36 (RDSQGNQEPTTTP) and 83–103 (TQAHGEQSSNSPSTQNGSLTT). Residues 105 to 125 (GGAQTDGQQSQTQSSENSESK) show a composition bias toward low complexity. One can recognise an RRM domain in the interval 129-205 (KRLHVSNIPF…RKIEVNNATA (77 aa)). At R285 the chain carries Omega-N-methylarginine. Asymmetric dimethylarginine occurs at positions 301 and 333. R385 and R390 each carry asymmetric dimethylarginine; alternate. Omega-N-methylarginine; alternate is present on residues R385 and R390.

Interacts with ER-alpha N-terminal activation domain. Interacts with RBPMS; the interaction allows cooperative assembly of stable cell-specific alternative splicing regulatory complexes.

It is found in the nucleus. The protein localises to the cytoplasm. RNA-binding protein that regulates alternative splicing events by binding to 5'-UGCAUGU-3' elements. Prevents binding of U2AF2 to the 3'-splice site. Regulates alternative splicing of tissue-specific exons and of differentially spliced exons during erythropoiesis. Seems to act as a coregulatory factor of ER-alpha. Together with RNA binding proteins RBPMS and MBNL1/2, activates vascular smooth muscle cells alternative splicing events. The sequence is that of RNA binding protein fox-1 homolog 2 (RBFOX2) from Bos taurus (Bovine).